Consider the following 130-residue polypeptide: Small ribosomal subunit protein uS9 (130 aa).

The protein belongs to the universal ribosomal protein uS9 family.

This chain is Small ribosomal subunit protein uS9, found in Buchnera aphidicola subsp. Baizongia pistaciae (strain Bp).